Here is a 206-residue protein sequence, read N- to C-terminus: Ribosomal RNA small subunit methyltransferase G (206 aa).

S-adenosyl-L-methionine is bound by residues Gly-73, Leu-78, 124-125 (VE), and Arg-139.

This sequence belongs to the methyltransferase superfamily. RNA methyltransferase RsmG family.

It localises to the cytoplasm. The enzyme catalyses guanosine(527) in 16S rRNA + S-adenosyl-L-methionine = N(7)-methylguanosine(527) in 16S rRNA + S-adenosyl-L-homocysteine. Functionally, specifically methylates the N7 position of guanine in position 527 of 16S rRNA. In Pectobacterium atrosepticum (strain SCRI 1043 / ATCC BAA-672) (Erwinia carotovora subsp. atroseptica), this protein is Ribosomal RNA small subunit methyltransferase G.